An 877-amino-acid polypeptide reads, in one-letter code: Phosphoenolpyruvate carboxylase (877 aa).

Catalysis depends on residues histidine 138 and lysine 544.

The protein belongs to the PEPCase type 1 family. The cofactor is Mg(2+).

The enzyme catalyses oxaloacetate + phosphate = phosphoenolpyruvate + hydrogencarbonate. Functionally, forms oxaloacetate, a four-carbon dicarboxylic acid source for the tricarboxylic acid cycle. The protein is Phosphoenolpyruvate carboxylase of Vibrio vulnificus (strain YJ016).